Reading from the N-terminus, the 232-residue chain is Probable GTP-binding protein EngB (232 aa).

The 176-residue stretch at 13–188 (IGLEVAFAGR…AGVMGNWYEY (176 aa)) folds into the EngB-type G domain. GTP contacts are provided by residues 21–28 (GRSNAGKS), 48–52 (GRTQM), 67–70 (DLPG), 134–137 (TKAD), and 167–169 (FSA). 2 residues coordinate Mg(2+): S28 and T50.

The protein belongs to the TRAFAC class TrmE-Era-EngA-EngB-Septin-like GTPase superfamily. EngB GTPase family. Requires Mg(2+) as cofactor.

In terms of biological role, necessary for normal cell division and for the maintenance of normal septation. This Psychrobacter arcticus (strain DSM 17307 / VKM B-2377 / 273-4) protein is Probable GTP-binding protein EngB.